Reading from the N-terminus, the 543-residue chain is CTP synthase (543 aa).

Residues 1 to 265 (MTRYIFVTGG…DDFVVERFGL (265 aa)) are amidoligase domain. Ser13 provides a ligand contact to CTP. Residue Ser13 participates in UTP binding. Residues 14–19 (SLGKGI) and Asp71 each bind ATP. Asp71 and Glu139 together coordinate Mg(2+). CTP is bound by residues 146 to 148 (DIE), 186 to 191 (KTKPTQ), and Lys222. UTP is bound by residues 186 to 191 (KTKPTQ) and Lys222. In terms of domain architecture, Glutamine amidotransferase type-1 spans 290–541 (TIAMVGKYME…VKAALAQHQK (252 aa)). Position 351 (Gly351) interacts with L-glutamine. The active-site Nucleophile; for glutamine hydrolysis is the Cys378. L-glutamine contacts are provided by residues 379–382 (LGMQ), Glu402, and Arg469. Active-site residues include His514 and Glu516.

This sequence belongs to the CTP synthase family. As to quaternary structure, homotetramer.

It catalyses the reaction UTP + L-glutamine + ATP + H2O = CTP + L-glutamate + ADP + phosphate + 2 H(+). The catalysed reaction is L-glutamine + H2O = L-glutamate + NH4(+). It carries out the reaction UTP + NH4(+) + ATP = CTP + ADP + phosphate + 2 H(+). Its pathway is pyrimidine metabolism; CTP biosynthesis via de novo pathway; CTP from UDP: step 2/2. With respect to regulation, allosterically activated by GTP, when glutamine is the substrate; GTP has no effect on the reaction when ammonia is the substrate. The allosteric effector GTP functions by stabilizing the protein conformation that binds the tetrahedral intermediate(s) formed during glutamine hydrolysis. Inhibited by the product CTP, via allosteric rather than competitive inhibition. In terms of biological role, catalyzes the ATP-dependent amination of UTP to CTP with either L-glutamine or ammonia as the source of nitrogen. Regulates intracellular CTP levels through interactions with the four ribonucleotide triphosphates. This is CTP synthase from Pseudomonas savastanoi pv. phaseolicola (strain 1448A / Race 6) (Pseudomonas syringae pv. phaseolicola (strain 1448A / Race 6)).